Here is a 217-residue protein sequence, read N- to C-terminus: Ribosomal RNA small subunit methyltransferase G (217 aa).

S-adenosyl-L-methionine contacts are provided by residues G79, L84, 130 to 131 (IE), and R148.

It belongs to the methyltransferase superfamily. RNA methyltransferase RsmG family.

The protein localises to the cytoplasm. It catalyses the reaction guanosine(527) in 16S rRNA + S-adenosyl-L-methionine = N(7)-methylguanosine(527) in 16S rRNA + S-adenosyl-L-homocysteine. Functionally, specifically methylates the N7 position of guanine in position 527 of 16S rRNA. The protein is Ribosomal RNA small subunit methyltransferase G of Desulfotalea psychrophila (strain LSv54 / DSM 12343).